Reading from the N-terminus, the 208-residue chain is Large ribosomal subunit protein uL3 (208 aa).

A disordered region spans residues His124 to Pro146.

Belongs to the universal ribosomal protein uL3 family. In terms of assembly, part of the 50S ribosomal subunit. Forms a cluster with proteins L14 and L19.

Functionally, one of the primary rRNA binding proteins, it binds directly near the 3'-end of the 23S rRNA, where it nucleates assembly of the 50S subunit. This Streptococcus thermophilus (strain ATCC BAA-491 / LMD-9) protein is Large ribosomal subunit protein uL3.